The primary structure comprises 517 residues: Retrotransposon-like protein 1 (517 aa).

Disordered stretches follow at residues 1-29 (MEVNEGQDTEGGSSRAQTLTPPPNPQQQL) and 142-161 (EEERDKRKKEEQFREADARS).

This Caenorhabditis elegans protein is Retrotransposon-like protein 1 (retr-1).